Consider the following 258-residue polypeptide: Hydroxyacylglutathione hydrolase cytoplasmic (258 aa).

2 residues coordinate Zn(2+): His54 and His56. The Fe cation site is built by Asp58 and His59. Residues His112 and Asp135 each coordinate Zn(2+). Asp135 contributes to the Fe cation binding site. Residues 144–146 (KFF) and 174–176 (HEY) contribute to the substrate site. His174 contacts Fe cation.

It belongs to the metallo-beta-lactamase superfamily. Glyoxalase II family. In terms of assembly, homodimer. Fe(2+) serves as cofactor. The cofactor is Zn(2+). It depends on Fe(3+) as a cofactor. Mainly expressed in flowers and flower buds. Also detected in roots and leaves.

The protein localises to the cytoplasm. The catalysed reaction is an S-(2-hydroxyacyl)glutathione + H2O = a 2-hydroxy carboxylate + glutathione + H(+). The protein operates within secondary metabolite metabolism; methylglyoxal degradation; (R)-lactate from methylglyoxal: step 2/2. In terms of biological role, thiolesterase that catalyzes the hydrolysis of S-D-lactoyl-glutathione to form glutathione and D-lactic acid. The polypeptide is Hydroxyacylglutathione hydrolase cytoplasmic (GLX2-2) (Arabidopsis thaliana (Mouse-ear cress)).